We begin with the raw amino-acid sequence, 204 residues long: LexA repressor (204 aa).

Residues 29-49 constitute a DNA-binding region (H-T-H motif); that stretch reads VREIGDAVGLMSSSTVHGHLQ. Residues Ser127 and Lys164 each act as for autocatalytic cleavage activity in the active site.

It belongs to the peptidase S24 family. In terms of assembly, homodimer.

It carries out the reaction Hydrolysis of Ala-|-Gly bond in repressor LexA.. In terms of biological role, represses a number of genes involved in the response to DNA damage (SOS response), including recA and lexA. In the presence of single-stranded DNA, RecA interacts with LexA causing an autocatalytic cleavage which disrupts the DNA-binding part of LexA, leading to derepression of the SOS regulon and eventually DNA repair. This Desulfitobacterium hafniense (strain DSM 10664 / DCB-2) protein is LexA repressor.